Reading from the N-terminus, the 383-residue chain is Deoxyguanosinetriphosphate triphosphohydrolase-like protein (383 aa).

The HD domain maps to 62 to 198; the sequence is RLTHSLEVST…AALADDISYI (137 aa).

Belongs to the dGTPase family. Type 2 subfamily.

The sequence is that of Deoxyguanosinetriphosphate triphosphohydrolase-like protein from Rickettsia felis (strain ATCC VR-1525 / URRWXCal2) (Rickettsia azadi).